The following is a 365-amino-acid chain: tRNA-specific 2-thiouridylase MnmA (365 aa).

Residues 9 to 16 (GLSGGVDS) and Met35 each bind ATP. The interaction with target base in tRNA stretch occupies residues 95–97 (NPD). Cys100 acts as the Nucleophile in catalysis. Residues Cys100 and Cys196 are joined by a disulfide bond. Residue Gly124 participates in ATP binding. Residues 146-148 (KDQ) are interaction with tRNA. The Cysteine persulfide intermediate role is filled by Cys196. The tract at residues 315 to 316 (RY) is interaction with tRNA.

Belongs to the MnmA/TRMU family.

The protein resides in the cytoplasm. The catalysed reaction is S-sulfanyl-L-cysteinyl-[protein] + uridine(34) in tRNA + AH2 + ATP = 2-thiouridine(34) in tRNA + L-cysteinyl-[protein] + A + AMP + diphosphate + H(+). In terms of biological role, catalyzes the 2-thiolation of uridine at the wobble position (U34) of tRNA, leading to the formation of s(2)U34. The sequence is that of tRNA-specific 2-thiouridylase MnmA from Dechloromonas aromatica (strain RCB).